The sequence spans 327 residues: Aspartate--ammonia ligase (327 aa).

Belongs to the class-II aminoacyl-tRNA synthetase family. AsnA subfamily.

The protein resides in the cytoplasm. The catalysed reaction is L-aspartate + NH4(+) + ATP = L-asparagine + AMP + diphosphate + H(+). It functions in the pathway amino-acid biosynthesis; L-asparagine biosynthesis; L-asparagine from L-aspartate (ammonia route): step 1/1. In Bacillus cereus (strain G9842), this protein is Aspartate--ammonia ligase.